The sequence spans 286 residues: Shikimate dehydrogenase (NADP(+)) (286 aa).

Residues 19-21 (SVS) and threonine 66 each bind shikimate. The Proton acceptor role is filled by lysine 70. Shikimate-binding residues include asparagine 91 and aspartate 106. Residues 130–134 (GAGGS) and alanine 225 each bind NADP(+). Tyrosine 227 is a binding site for shikimate. Glycine 248 is an NADP(+) binding site.

It belongs to the shikimate dehydrogenase family. Homodimer.

It catalyses the reaction shikimate + NADP(+) = 3-dehydroshikimate + NADPH + H(+). The protein operates within metabolic intermediate biosynthesis; chorismate biosynthesis; chorismate from D-erythrose 4-phosphate and phosphoenolpyruvate: step 4/7. In terms of biological role, involved in the biosynthesis of the chorismate, which leads to the biosynthesis of aromatic amino acids. Catalyzes the reversible NADPH linked reduction of 3-dehydroshikimate (DHSA) to yield shikimate (SA). This is Shikimate dehydrogenase (NADP(+)) from Dehalococcoides mccartyi (strain CBDB1).